The following is a 251-amino-acid chain: Probable transcriptional regulatory protein MSMEG_2940/MSMEI_2866 (251 aa).

Belongs to the TACO1 family.

The protein localises to the cytoplasm. In Mycolicibacterium smegmatis (strain ATCC 700084 / mc(2)155) (Mycobacterium smegmatis), this protein is Probable transcriptional regulatory protein MSMEG_2940/MSMEI_2866.